The following is a 619-amino-acid chain: Dihydroxy-acid dehydratase (619 aa).

Asp-81 contributes to the Mg(2+) binding site. Residue Cys-122 coordinates [2Fe-2S] cluster. Residues Asp-123 and Lys-124 each coordinate Mg(2+). Lys-124 is modified (N6-carboxylysine). A [2Fe-2S] cluster-binding site is contributed by Cys-198. Glu-494 contacts Mg(2+). The active-site Proton acceptor is Ser-520.

It belongs to the IlvD/Edd family. As to quaternary structure, homodimer. Requires [2Fe-2S] cluster as cofactor. It depends on Mg(2+) as a cofactor.

It carries out the reaction (2R)-2,3-dihydroxy-3-methylbutanoate = 3-methyl-2-oxobutanoate + H2O. It catalyses the reaction (2R,3R)-2,3-dihydroxy-3-methylpentanoate = (S)-3-methyl-2-oxopentanoate + H2O. The protein operates within amino-acid biosynthesis; L-isoleucine biosynthesis; L-isoleucine from 2-oxobutanoate: step 3/4. It functions in the pathway amino-acid biosynthesis; L-valine biosynthesis; L-valine from pyruvate: step 3/4. Functions in the biosynthesis of branched-chain amino acids. Catalyzes the dehydration of (2R,3R)-2,3-dihydroxy-3-methylpentanoate (2,3-dihydroxy-3-methylvalerate) into 2-oxo-3-methylpentanoate (2-oxo-3-methylvalerate) and of (2R)-2,3-dihydroxy-3-methylbutanoate (2,3-dihydroxyisovalerate) into 2-oxo-3-methylbutanoate (2-oxoisovalerate), the penultimate precursor to L-isoleucine and L-valine, respectively. This Neisseria gonorrhoeae (strain ATCC 700825 / FA 1090) protein is Dihydroxy-acid dehydratase.